Consider the following 292-residue polypeptide: F-box only protein 16 (292 aa).

In terms of domain architecture, F-box spans Leu-86–Lys-132. Disordered stretches follow at residues Ser-188 to Lys-224 and Arg-238 to Pro-292. The segment covering Ser-194–Ser-204 has biased composition (low complexity). A compositionally biased stretch (basic and acidic residues) spans Arg-260–Thr-273.

As to quaternary structure, part of a SCF (SKP1-cullin-F-box) protein ligase complex. As to expression, expressed in heart, spleen and colon.

Functionally, probably recognizes and binds to some phosphorylated proteins and promotes their ubiquitination and degradation. This is F-box only protein 16 (FBXO16) from Homo sapiens (Human).